Reading from the N-terminus, the 791-residue chain is Penicillin-binding protein 1A (791 aa).

Residues 1 to 6 are Cytoplasmic-facing; the sequence is MYKSLF. The chain crosses the membrane as a helical; Signal-anchor for type II membrane protein span at residues 7 to 27; that stretch reads FCLKILALLFLIGCGIVAYII. At 28–791 the chain is on the periplasmic side; sequence YYYSRDLPDY…TEKDQSQEIY (764 aa). The tract at residues 49-220 is transglycosylase; it reads TRIYSRDGKL…SELNPEKNYA (172 aa). Residue Glu-87 is the Proton donor; for transglycosylase activity of the active site. The transpeptidase stretch occupies residues 398–711; sequence DVIVVEPVKD…SSVVLPIFID (314 aa). The active-site Acyl-ester intermediate; for transpeptidase activity is the Ser-457.

It in the N-terminal section; belongs to the glycosyltransferase 51 family. In the C-terminal section; belongs to the transpeptidase family.

Its subcellular location is the cell inner membrane. The enzyme catalyses [GlcNAc-(1-&gt;4)-Mur2Ac(oyl-L-Ala-gamma-D-Glu-L-Lys-D-Ala-D-Ala)](n)-di-trans,octa-cis-undecaprenyl diphosphate + beta-D-GlcNAc-(1-&gt;4)-Mur2Ac(oyl-L-Ala-gamma-D-Glu-L-Lys-D-Ala-D-Ala)-di-trans,octa-cis-undecaprenyl diphosphate = [GlcNAc-(1-&gt;4)-Mur2Ac(oyl-L-Ala-gamma-D-Glu-L-Lys-D-Ala-D-Ala)](n+1)-di-trans,octa-cis-undecaprenyl diphosphate + di-trans,octa-cis-undecaprenyl diphosphate + H(+). It carries out the reaction Preferential cleavage: (Ac)2-L-Lys-D-Ala-|-D-Ala. Also transpeptidation of peptidyl-alanyl moieties that are N-acyl substituents of D-alanine.. Its pathway is cell wall biogenesis; peptidoglycan biosynthesis. Functionally, cell wall formation. Synthesis of cross-linked peptidoglycan from the lipid intermediates. The enzyme has a penicillin-insensitive transglycosylase N-terminal domain (formation of linear glycan strands) and a penicillin-sensitive transpeptidase C-terminal domain (cross-linking of the peptide subunits). The protein is Penicillin-binding protein 1A (mrcA) of Rickettsia bellii (strain RML369-C).